Reading from the N-terminus, the 350-residue chain is tRNA N6-adenosine threonylcarbamoyltransferase (350 aa).

Residues histidine 117 and histidine 121 each coordinate Fe cation. Substrate contacts are provided by residues 140–144, aspartate 173, glycine 186, and asparagine 277; that span reads LVSGG. Position 305 (aspartate 305) interacts with Fe cation.

This sequence belongs to the KAE1 / TsaD family. It depends on Fe(2+) as a cofactor.

It is found in the cytoplasm. It carries out the reaction L-threonylcarbamoyladenylate + adenosine(37) in tRNA = N(6)-L-threonylcarbamoyladenosine(37) in tRNA + AMP + H(+). In terms of biological role, required for the formation of a threonylcarbamoyl group on adenosine at position 37 (t(6)A37) in tRNAs that read codons beginning with adenine. Is involved in the transfer of the threonylcarbamoyl moiety of threonylcarbamoyl-AMP (TC-AMP) to the N6 group of A37, together with TsaE and TsaB. TsaD likely plays a direct catalytic role in this reaction. The chain is tRNA N6-adenosine threonylcarbamoyltransferase from Novosphingobium aromaticivorans (strain ATCC 700278 / DSM 12444 / CCUG 56034 / CIP 105152 / NBRC 16084 / F199).